The following is a 377-amino-acid chain: Transcription factor ast-1 (377 aa).

Positions 72–143 (PNRMLYNDNT…SNGSSSSTES (72 aa)) are disordered. Low complexity-rich tracts occupy residues 96 to 109 (STSA…TSSK) and 118 to 142 (TESS…SSTE). The ETS DNA-binding region spans 214–294 (TQLWQFLLEL…HGKRYAYKFD (81 aa)).

The protein belongs to the ETS family. Expressed in the A-neurons in the male-specific genital sensilla (simple sense organs) known as rays.

Its subcellular location is the nucleus. It is found in the cell projection. The protein localises to the neuron projection. Functionally, transcription factor. Probably binds to DNA sequences containing the consensus motif 5'-CGGA[AT][AG]-3'. Positively modulates expression of dopamine pathway genes, acting as a terminal selector for differentiation of dopaminergic neurons; may act in concert with homeobox proteins ceh-40, ceh-43 and ceh-20. Required for axon navigation in some interneurons, perhaps acting in the same pathways as basement membrane protein nid-1 and unc-6/netrin. Plays a role in the differentiation of the ventral cord pioneer neuron AVG. Required for morphogenesis of the pharynx. This is Transcription factor ast-1 from Caenorhabditis elegans.